The primary structure comprises 1210 residues: Ice nucleation protein (1210 aa).

The segment at 165–1156 (AVYGSTLTGA…LSGGENSTLI (992 aa)) is octapeptide periodicity.

Belongs to the bacterial ice nucleation protein family.

Its subcellular location is the cell outer membrane. Functionally, ice nucleation proteins enable bacteria to nucleate crystallization in supercooled water. The polypeptide is Ice nucleation protein (inaW) (Pseudomonas fluorescens).